Reading from the N-terminus, the 197-residue chain is Holliday junction branch migration complex subunit RuvA (197 aa).

Residues 1–63 form a domain I region; that stretch reads MINKIHGKVI…ENELKLFGFL (63 aa). A domain II region spans residues 64-139; it reads NSDEREIFKE…KLLINSELES (76 aa). Residue Ser-139 is a region of interest, flexible linker. The segment at 140 to 197 is domain III; that stretch reads TGLFRFKELEESIVSMGFDRKIVNSKIREAFNLAEFANLKDSEKEQFLFKEVLKRISN.

It belongs to the RuvA family. As to quaternary structure, homotetramer. Forms an RuvA(8)-RuvB(12)-Holliday junction (HJ) complex. HJ DNA is sandwiched between 2 RuvA tetramers; dsDNA enters through RuvA and exits via RuvB. An RuvB hexamer assembles on each DNA strand where it exits the tetramer. Each RuvB hexamer is contacted by two RuvA subunits (via domain III) on 2 adjacent RuvB subunits; this complex drives branch migration. In the full resolvosome a probable DNA-RuvA(4)-RuvB(12)-RuvC(2) complex forms which resolves the HJ.

The protein localises to the cytoplasm. In terms of biological role, the RuvA-RuvB-RuvC complex processes Holliday junction (HJ) DNA during genetic recombination and DNA repair, while the RuvA-RuvB complex plays an important role in the rescue of blocked DNA replication forks via replication fork reversal (RFR). RuvA specifically binds to HJ cruciform DNA, conferring on it an open structure. The RuvB hexamer acts as an ATP-dependent pump, pulling dsDNA into and through the RuvAB complex. HJ branch migration allows RuvC to scan DNA until it finds its consensus sequence, where it cleaves and resolves the cruciform DNA. In Borreliella burgdorferi (strain ATCC 35210 / DSM 4680 / CIP 102532 / B31) (Borrelia burgdorferi), this protein is Holliday junction branch migration complex subunit RuvA.